The sequence spans 270 residues: Imidazole glycerol phosphate synthase subunit HisF (270 aa).

Catalysis depends on residues Asp11 and Asp135.

The protein belongs to the HisA/HisF family. As to quaternary structure, heterodimer of HisH and HisF.

The protein resides in the cytoplasm. It catalyses the reaction 5-[(5-phospho-1-deoxy-D-ribulos-1-ylimino)methylamino]-1-(5-phospho-beta-D-ribosyl)imidazole-4-carboxamide + L-glutamine = D-erythro-1-(imidazol-4-yl)glycerol 3-phosphate + 5-amino-1-(5-phospho-beta-D-ribosyl)imidazole-4-carboxamide + L-glutamate + H(+). Its pathway is amino-acid biosynthesis; L-histidine biosynthesis; L-histidine from 5-phospho-alpha-D-ribose 1-diphosphate: step 5/9. IGPS catalyzes the conversion of PRFAR and glutamine to IGP, AICAR and glutamate. The HisF subunit catalyzes the cyclization activity that produces IGP and AICAR from PRFAR using the ammonia provided by the HisH subunit. The protein is Imidazole glycerol phosphate synthase subunit HisF of Haloquadratum walsbyi (strain DSM 16790 / HBSQ001).